Here is a 408-residue protein sequence, read N- to C-terminus: Lupus La protein (408 aa).

The HTH La-type RNA-binding domain maps to 7-99; sequence NEKMAALEAK…RRSPSKPLPE (93 aa). A phosphoserine mark is found at serine 92 and serine 94. One can recognise an RRM domain in the interval 111–187; it reads RSVYIKGFPT…TDLLILFKDD (77 aa). Residue lysine 116 is modified to N6-acetyllysine. At threonine 120 the chain carries Phosphothreonine. Lysine 128 is modified (N6-acetyllysine). The residue at position 225 (serine 225) is a Phosphoserine. The 122-residue stretch at 227–348 folds into the xRRM domain; the sequence is EEKIGCLLKF…KGKGNKAAQP (122 aa). N6-acetyllysine occurs at positions 328, 341, and 360. The segment covering 329–342 has biased composition (basic residues); the sequence is WKSKGRRFKGKGKG. The disordered stretch occupies residues 329–408; it reads WKSKGRRFKG…QKTENGAGDQ (80 aa). At threonine 362 the chain carries Phosphothreonine. Serine 366 carries the post-translational modification Phosphoserine; by CK2. Positions 384-395 are enriched in basic and acidic residues; that stretch reads RAREETDKEEPA.

In terms of assembly, interacts with DDX15. May interact with RUFY1. Post-translationally, phosphorylated. The phosphorylation sites are at the C-terminal part of the protein. The N-terminus is blocked.

It localises to the nucleus. Functionally, binds to the 3' poly(U) terminus of nascent RNA polymerase III transcripts, protecting them from exonuclease digestion and facilitating their folding and maturation. In case of Coxsackievirus B3 infection, binds to the viral internal ribosome entry site (IRES) and stimulates the IRES-mediated translation. The protein is Lupus La protein (SSB) of Homo sapiens (Human).